The primary structure comprises 270 residues: Flavodoxin/ferredoxin--NADP reductase (270 aa).

The 102-residue stretch at 12-113 folds into the FAD-binding FR-type domain; that stretch reads VLPDAQTVTS…PKPVGTLVID (102 aa). Residues 62–65, 78–80, and 86–88 each bind FAD; these read RAYS, YSI, and PLT. NADP(+) is bound at residue Thr-126. Thr-128 is a binding site for FAD. NADP(+) contacts are provided by residues Arg-156, 192–193, Arg-201, and Asp-238; that span reads TR. Residue 264–270 coordinates FAD; it reads AFVGEGI.

It belongs to the ferredoxin--NADP reductase type 1 family. As to quaternary structure, monomer. FAD serves as cofactor.

It localises to the cytoplasm. It carries out the reaction 2 reduced [2Fe-2S]-[ferredoxin] + NADP(+) + H(+) = 2 oxidized [2Fe-2S]-[ferredoxin] + NADPH. The enzyme catalyses reduced [flavodoxin] + NADP(+) = oxidized [flavodoxin] + NADPH + 2 H(+). Functionally, transports electrons between flavodoxin or ferredoxin and NADPH. This chain is Flavodoxin/ferredoxin--NADP reductase, found in Rhodobacter capsulatus (Rhodopseudomonas capsulata).